A 177-amino-acid chain; its full sequence is NADH-quinone oxidoreductase subunit B (177 aa).

4 residues coordinate [4Fe-4S] cluster: Cys56, Cys57, Cys121, and Cys151.

Belongs to the complex I 20 kDa subunit family. As to quaternary structure, NDH-1 is composed of 14 different subunits. Subunits NuoB, C, D, E, F, and G constitute the peripheral sector of the complex. Requires [4Fe-4S] cluster as cofactor.

The protein resides in the cell inner membrane. The enzyme catalyses a quinone + NADH + 5 H(+)(in) = a quinol + NAD(+) + 4 H(+)(out). NDH-1 shuttles electrons from NADH, via FMN and iron-sulfur (Fe-S) centers, to quinones in the respiratory chain. Couples the redox reaction to proton translocation (for every two electrons transferred, four hydrogen ions are translocated across the cytoplasmic membrane), and thus conserves the redox energy in a proton gradient. The polypeptide is NADH-quinone oxidoreductase subunit B (Jannaschia sp. (strain CCS1)).